An 813-amino-acid polypeptide reads, in one-letter code: MNEYNFSDIEKSTQEYWRKNDTFKTIEDNTKEKFYCLSMLPYPSGTLHMGHVRNYTIGDVIARYQKMQGKNVLHPMGWDAFGLPAENAAIKHKKSPYEWTKSNIAYMRSQFDSLGFSFDWSREIATCDEDYYKWEQWFFIQLYKKGLAYRKNSVVNWDPVDQTVLANEQVVDGRGWRSGALVEKKEIPQWFLKITDYADELLQDINKLDNWPEAVKTMQINWIGKSKGLTVKFKVKDSNQEIEVFTTRPDTLMGVNYLGIAPEHPLALKEAKSNSQLAAFIEECKKTSTMEADLATQEKKGFKTSIKVIHPISAETIDVWVANFVLMGYGSGAVMSVPAHDQRDWEFAQKYNIPLKQVIESNDNKLKIDLEKQAFTEKGILINSGEFDGLNFKNAYQAIKKYLTEQNKGYETTNFRIHDWGISRQRYWGCPIPMIHCDDCGAVPEKEENLPVRLPTDVALTEAGSPLKDIPEFINVACPECGKPAKRETDTFDTFFESSWYYARYTCPTANQMLDQEANYWLPVDKYIGGIEHAIMHLLYARFFHKLMRDQGLVKSDEPFKNLLTQGMVLKDGAKMSKSKGNIVDPQELIDKYGADTVRLFSMFAAPPEQSLEWSETGVEGANKFLRKVFNYAELNKVIFAKNITLESQKLTKEDKKARFEIHSNLKQAIFDFDKSQFNTVVSACMKILNTLNNYDNLSESVKVEGFSILLRILAPFTPHLCHYLWQQLNLGEDILHTSFPIVDNNALEKDEFLLVVQINGKLKAKLELDASLSSNQVEEVVLADEHVKSFIDNKQVVKVIYVPQKLINIVIK.

Residues 41 to 51 (PYPSGTLHMGH) carry the 'HIGH' region motif. Residues 575–579 (KMSKS) carry the 'KMSKS' region motif. Lys-578 is a binding site for ATP.

It belongs to the class-I aminoacyl-tRNA synthetase family.

It is found in the cytoplasm. The catalysed reaction is tRNA(Leu) + L-leucine + ATP = L-leucyl-tRNA(Leu) + AMP + diphosphate. The sequence is that of Leucine--tRNA ligase from Francisella tularensis subsp. tularensis (strain WY96-3418).